Reading from the N-terminus, the 259-residue chain is Protein GrpE (259 aa).

2 disordered regions span residues 1–74 and 228–259; these read MNSD…IKGS and PGPKVINEEIPDQSASNQELSESVDGSTKDEN. Over residues 17–40 the composition is skewed to low complexity; that stretch reads SSQNNPSENSVSSPNSNESVNQVE. Polar residues-rich tracts occupy residues 56–73 and 240–253; these read VDTANEQSSTSCESNIKG and QSASNQELSESVDG.

The protein belongs to the GrpE family. As to quaternary structure, homodimer.

Its subcellular location is the cytoplasm. Its function is as follows. Participates actively in the response to hyperosmotic and heat shock by preventing the aggregation of stress-denatured proteins, in association with DnaK and GrpE. It is the nucleotide exchange factor for DnaK and may function as a thermosensor. Unfolded proteins bind initially to DnaJ; upon interaction with the DnaJ-bound protein, DnaK hydrolyzes its bound ATP, resulting in the formation of a stable complex. GrpE releases ADP from DnaK; ATP binding to DnaK triggers the release of the substrate protein, thus completing the reaction cycle. Several rounds of ATP-dependent interactions between DnaJ, DnaK and GrpE are required for fully efficient folding. The sequence is that of Protein GrpE from Prochlorococcus marinus (strain NATL2A).